An 861-amino-acid chain; its full sequence is MHTAAAATPATSPRDILKAERAHLFAQFEQHANVNLLVTKLARAVDQALILLWQDEGMPDTCALVAVGGYGRGELFPHSDVDILLLLPQTADKALETRLEAFIGHCWDMGLDIGSSVRTVDECISEATQDVTVCTSLLEARLLTGDEGLYRTFETHYQGHLDAADFYQSKMLEMRQRHAKYQDTPYSLEPNCKESPGGLRDLQVILWMTRAAGFGSSWNELLVNQLLTRREAKELAANERLLKTIRARLHLLAGRRQDVLVFDLQTQLGEAFGYRPNAAKRTSEQLMRRYYWAAKAVTQLNTVVLQNIEARLFPTELGITRTINGRFVERQGMLEIADPELYQREPAAILETFLVYEQTRGVKGLAANTLRALYNARTQMDARWRRDPANRATFLSILQQPQGITHALRLMNQTSVLGRYLVNFRRIVGQMQHDLFHVYTVDQHILMVVRNVRRFAIVEHAHEFPFCSQLMANFDKPWVLTVAALFHDIAKGRGGDHSVLGMADARRFCKQHGIASEDADLIVWLVEHHLTMSQVAQKQDLGDPEVIRHFADQVGSERYLSALYLLTVADIRGTSPKVWNAWKAKLLEDLYRITLRVLGGATTDPHAVLEGRKEEARVLLRLAAMDPHAHEALWAQLDVGVFLRHDARDIAWFTRHFYNRVDTTLPIVRARISPVGEGLQVAVYSPDRPDLFARICGYFERKGLTILDAKIHTTKHGYALDTFQVADPGSGLVEPGHYRDIITLVEHELAELIARETVLAEPPRGRISRQSRSFPIKPRVDLRPDERGQYYLLSLSATDRTGLLYAIARVLARHRVSVHTARINTLGERVEDVFLLDGRRLTQDNKLQLALESELLEALAI.

Residues 1-322 form a uridylyltransferase region; the sequence is MHTAAAATPA…FPTELGITRT (322 aa). Residues 323–679 form a uridylyl-removing region; sequence INGRFVERQG…ARISPVGEGL (357 aa). The 117-residue stretch at 441-557 folds into the HD domain; the sequence is VDQHILMVVR…RHFADQVGSE (117 aa). ACT domains are found at residues 680–763 and 792–861; these read QVAV…AEPP and LLSL…ALAI.

Belongs to the GlnD family. Mg(2+) serves as cofactor.

The catalysed reaction is [protein-PII]-L-tyrosine + UTP = [protein-PII]-uridylyl-L-tyrosine + diphosphate. It catalyses the reaction [protein-PII]-uridylyl-L-tyrosine + H2O = [protein-PII]-L-tyrosine + UMP + H(+). Uridylyltransferase (UTase) activity is inhibited by glutamine, while glutamine activates uridylyl-removing (UR) activity. Functionally, modifies, by uridylylation and deuridylylation, the PII regulatory proteins (GlnB and homologs), in response to the nitrogen status of the cell that GlnD senses through the glutamine level. Under low glutamine levels, catalyzes the conversion of the PII proteins and UTP to PII-UMP and PPi, while under higher glutamine levels, GlnD hydrolyzes PII-UMP to PII and UMP (deuridylylation). Thus, controls uridylylation state and activity of the PII proteins, and plays an important role in the regulation of nitrogen assimilation and metabolism. The polypeptide is Bifunctional uridylyltransferase/uridylyl-removing enzyme (Ralstonia nicotianae (strain ATCC BAA-1114 / GMI1000) (Ralstonia solanacearum)).